Consider the following 144-residue polypeptide: Small polypeptide DEVIL 15 (144 aa).

N8 is a glycosylation site (N-linked (GlcNAc...) asparagine). A disordered region spans residues 22-63 (SSSSKPFFTRSFSTKTSSSPSSKSHFTRSFSTKPSSSSSSSD). The helical transmembrane segment at 104-120 (ILSKKGASVTGKCFKVA) threads the bilayer. Positions 111 to 142 (SVTGKCFKVAKEHKSRFYIIKRCVLMLVCWHK) are required for DVL/RTFL small polypeptide activity.

The protein belongs to the DVL/RTFL small polypeptides family.

It localises to the cell membrane. Small polypeptide acting as a regulatory molecule which coordinates cellular responses required for differentiation, growth and development, probably by restricting polar cell proliferation in lateral organs and coordinating socket cell recruitment and differentiation at trichome sites. The polypeptide is Small polypeptide DEVIL 15 (Arabidopsis thaliana (Mouse-ear cress)).